The primary structure comprises 424 residues: Ornithine aminotransferase (424 aa).

N6-(pyridoxal phosphate)lysine is present on K272. K390 is covalently cross-linked (Glycyl lysine isopeptide (Lys-Gly) (interchain with G-Cter in ubiquitin)).

The protein belongs to the class-III pyridoxal-phosphate-dependent aminotransferase family. Requires pyridoxal 5'-phosphate as cofactor.

It is found in the cytoplasm. It catalyses the reaction a 2-oxocarboxylate + L-ornithine = L-glutamate 5-semialdehyde + an L-alpha-amino acid. Its pathway is amino-acid biosynthesis; L-proline biosynthesis; L-glutamate 5-semialdehyde from L-ornithine: step 1/1. Its activity is regulated as follows. By arginine and urea. Its function is as follows. Catalyzes the transamination of ornithine into L-glutamate gamma-semialdehyde, the second step of arginine degradation. This chain is Ornithine aminotransferase (CAR2), found in Saccharomyces cerevisiae (strain ATCC 204508 / S288c) (Baker's yeast).